The following is a 140-amino-acid chain: HTH-type transcriptional regulator AdhR (140 aa).

Residues 1-69 (MNIAQVAKQF…IEALIEYTTL (69 aa)) enclose the HTH merR-type domain. The segment at residues 3-22 (IAQVAKQFGLTAATLRYYER) is a DNA-binding region (H-T-H motif). The stretch at 75 to 125 (RTVEARKNILADERQRLIEKRKEIDETIKRLDTKIKDYDGKLRENEAKLKS) forms a coiled coil. The interval 120 to 140 (EAKLKSRPKTESLHGSVEQRR) is disordered.

In terms of biological role, transcriptional regulator involved in the response to aldehyde stress. Binds to the promoter region of the adhA-yraA operon, the yraC and its own promoter region; binding is unchanged in the presence of aldehydes. This Bacillus subtilis (strain 168) protein is HTH-type transcriptional regulator AdhR (adhR).